Consider the following 156-residue polypeptide: WASQVSENRPVCKAIIQGKQFEGLVDTGADVSIIALNQWPKNWPKQKAVTGLVGIGTASEVYQSTEILHCLGPDNQESTVQPMITSIPLNLWGRDLLQQWGAEITMPAPLYSPTSQKIMTKMGYIPGKGLGKNEDGIKIPFEAKINQKREGIGYPF.

A Peptidase A2 domain is found at 21-96 (FEGLVDTGAD…IPLNLWGRDL (76 aa)). The active site involves Asp26. The 46-residue stretch at 111 to 156 (YSPTSQKIMTKMGYIPGKGLGKNEDGIKIPFEAKINQKREGIGYPF) folds into the G-patch domain.

It belongs to the peptidase A2 family. HERV class-II K(HML-2) subfamily. In terms of assembly, active as a homodimer. Autoproteolytically processed at the N-terminus. Expected C-terminal autoprocessing not detected. The sequence shown is that of the processed Pro protein.

It catalyses the reaction Processing at the authentic HIV-1 PR recognition site and release of the mature p17 matrix and the p24 capsid protein, as a result of the cleavage of the -SQNY-|-PIVQ- cleavage site.. Its function is as follows. Retroviral proteases have roles in processing of the primary translation products and the maturation of the viral particle. Endogenous Pro proteins may have kept, lost or modified their original function during evolution. This endogenous protein has retained most of the characteristics of retroviral proteases. The sequence is that of Endogenous retrovirus group K member 24 Pro protein (ERVK-24) from Homo sapiens (Human).